The chain runs to 206 residues: dITP/XTP pyrophosphatase (206 aa).

Substrate is bound at residue Ser-7 to Lys-12. The Proton acceptor role is filled by Asp-70. Asp-70 serves as a coordination point for Mg(2+). Residues Thr-71, Phe-154–Asp-157, Lys-177, and His-182–Arg-183 each bind substrate.

It belongs to the HAM1 NTPase family. In terms of assembly, homodimer. It depends on Mg(2+) as a cofactor.

The enzyme catalyses XTP + H2O = XMP + diphosphate + H(+). It catalyses the reaction dITP + H2O = dIMP + diphosphate + H(+). The catalysed reaction is ITP + H2O = IMP + diphosphate + H(+). Its function is as follows. Pyrophosphatase that catalyzes the hydrolysis of nucleoside triphosphates to their monophosphate derivatives, with a high preference for the non-canonical purine nucleotides XTP (xanthosine triphosphate), dITP (deoxyinosine triphosphate) and ITP. Seems to function as a house-cleaning enzyme that removes non-canonical purine nucleotides from the nucleotide pool, thus preventing their incorporation into DNA/RNA and avoiding chromosomal lesions. This chain is dITP/XTP pyrophosphatase, found in Chlamydia pneumoniae (Chlamydophila pneumoniae).